Here is a 114-residue protein sequence, read N- to C-terminus: UPF0342 protein LSL_0473 (114 aa).

This sequence belongs to the UPF0342 family.

This Ligilactobacillus salivarius (strain UCC118) (Lactobacillus salivarius) protein is UPF0342 protein LSL_0473.